We begin with the raw amino-acid sequence, 525 residues long: Histidine-rich glycoprotein (525 aa).

The N-terminal stretch at 1-18 (MKVLTTALLLVTLQCSHA) is a signal peptide. Positions 19 to 122 (LSPTNCDASE…ESQDLSVNGY (104 aa)) constitute a Cystatin 1 domain. 5 disulfide bridges follow: C24–C504, C78–C89, C103–C124, C201–C414, and C216–C239. Residues 41–84 (GRRSGYVFELLRVSDAHLDRAGTATVYYLALDVIESDCWVLSTK) form an interaction with ATP5F1A region. N112, N123, and N200 each carry an N-linked (GlcNAc...) asparagine glycan. One can recognise a Cystatin 2 domain in the interval 135-240 (NTKDSPVLLD…TPDSIDINCE (106 aa)). Residues 273-447 (GSRDHHHTHK…SRKRGPGKGL (175 aa)) are disordered. Residues 293 to 303 (EGKDNSDRPRL) are compositionally biased toward basic and acidic residues. N-linked (GlcNAc...) asparagine glycans are attached at residues N322 and N330. A compositionally biased stretch (basic residues) spans 339-404 (HGHRPHGHHP…GHHPHGHHPH (66 aa)). The interval 345–379 (GHHPHSHHPPGHHSHGHHPHGHHPHSHHSHGHHPP) is necessary for endothelial cell focal adhesions and anti-angiogenic activities. S438 bears the Phosphoserine mark.

In terms of assembly, interacts with THBS1 (via the TSP type I repeats); the interaction blocks the antiangiogenic effect of THBS1 with CD36. Interacts with HPSE; the interaction is enhanced at acidic pH, partially inhibits binding of HPSE to cell surface receptors and modulates its enzymatic activity. Interacts (via the HRR domain) with TMP1; the interaction partially mediates the antiangiogenic properties of HRG. Interacts with kappa and lambda light chains of IgG molecules. Interacts with ATP5F1A; the interaction occurs on the surface of T-cells and alters their cell morphology in concert with CONA. Binds IgG molecules containing kappa and lambda light chains and inhibits the formation of insoluble immunoglobulin complexes. Interacts with F12; the interaction, which is enhanced in the presence of zinc ions and inhibited by heparin-binding to HRG, inhibits factor XII autoactivation and contact-initiated coagulation. Interacts with PLG (via its Kringle domains); the interaction tethers PLG to the cell surface and enhances its activation. Interacts (via the HRR domain) with TPM1; the interaction appears to contribute to the antiangiogenic properties of the HRR domain. Interacts with THBS2; the interaction blocks the antiangiogenic effect of THBS2 with CD36. The cofactor is Zn(2+). Post-translationally, proteolytic cleavage produces several HRG fragments which are mostly disulfide-linked and, therefore, not released. Cleavage by plasmin is inhibited in the presence of heparin, zinc ions or in an acidic environment. Cleavage reduces binding of HRG to heparan sulfate, but enhances the ability of HRG to bind and tether plasminogen to the cell surface. On platelet activation, releases a 33 kDa antiangiogenic peptide which encompasses the HRR. Also cleaved in the C-terminal by plasmin. In terms of processing, N-glycosylated. Expressed in liver, blood plasma, serum and in platelets. Also present in fibrin clots, wound fluid from acute wounds and chronic leg ulcers.

The protein resides in the secreted. Plasma glycoprotein that binds a number of ligands such as heme, heparin, heparan sulfate, thrombospondin, plasminogen, and divalent metal ions. Binds heparin and heparin/glycosaminoglycans in a zinc-dependent manner. Binds heparan sulfate on the surface of liver, lung, kidney and heart endothelial cells. Binds to N-sulfated polysaccharide chains on the surface of liver endothelial cells. Inhibits rosette formation. Acts as an adapter protein and is implicated in regulating many processes such as immune complex and pathogen clearance, cell chemotaxis, cell adhesion, angiogenesis, coagulation and fibrinolysis. Mediates clearance of necrotic cells through enhancing the phagocytosis of necrotic cells in a heparan sulfate-dependent pathway. This process can be regulated by the presence of certain HRG ligands such as heparin and zinc ions. Binds to IgG subclasses of immunoglobins containing kappa and lambda light chains with different affinities regulating their clearance and inhibiting the formation of insoluble immune complexes. Tethers plasminogen to the cell surface. Binds T-cells and alters the cell morphology. Acts as a regulator of the vascular endothelial growth factor (VEGF) signaling pathway; inhibits endothelial cell motility by reducing VEGF-induced complex formation between PXN/paxillin and ILK/integrin-linked protein kinase and by promoting inhibition of VEGF-induced tyrosine phosphorylation of focal adhesion kinases and alpha-actinins in endothelial cells. Also plays a role in the regulation of tumor angiogenesis and tumor immune surveillance. Normalizes tumor vessels and promotes antitumor immunity by polarizing tumor-associated macrophages, leading to decreased tumor growth and metastasis. Modulates angiogenesis by blocking the CD6-mediated antiangiongenic effect of thrombospondins, THBS1 and THBS2. The protein is Histidine-rich glycoprotein (Hrg) of Mus musculus (Mouse).